The following is a 741-amino-acid chain: Pentatricopeptide repeat-containing protein At1g08070, chloroplastic (741 aa).

PPR repeat units lie at residues 98–132, 133–167, 168–202, 203–229, 230–264, 265–299, 300–330, 331–365, 366–396, 403–433, 434–468, 469–499, and 505–535; these read NLLI…GLLP, NSYT…GCDL, DLYV…DVVS, YTAL…IPVK, DVVS…NVRP, DEST…GFGS, NLKI…LPYK, DVIS…GETP, NDVT…IDKR, ASSL…ILHK, SLSS…GIQP, DDIT…MTQD, and KLEH…MEME. The segment at 540–615 is type E motif; it reads IWCSLLKACK…VPGCSSIEID (76 aa). Positions 616–646 are type E(+) motif; that stretch reads SVVHEFIIGDKFHPRNREIYGMLEEMEVLLE. The segment at 647–741 is type DYW motif; sequence KAGFVPDTSE…DGVCSCNDYW (95 aa).

It belongs to the PPR family. PCMP-H subfamily. As to quaternary structure, interacts with ORRM1. Interacts with VAR3/OZ1.

The protein localises to the plastid. The protein resides in the chloroplast. In terms of biological role, involved in multiple sites RNA editing events in chloroplasts. Involved in the editing of the site 9 of ndhB (ndhB-9) and site 1 of ndhG (ndhG-1) transcripts, which are two plastid-encoded subunits of the chloroplast NAD(P)H dehydrogenase (NDH) complex. Not essential for the activity of the NDH complex of the photosynthetic electron transport chain. This is Pentatricopeptide repeat-containing protein At1g08070, chloroplastic (PCMP-H12) from Arabidopsis thaliana (Mouse-ear cress).